Here is a 108-residue protein sequence, read N- to C-terminus: UPF0060 membrane protein YnfA (108 aa).

The Periplasmic portion of the chain corresponds to 1-5 (MIKTT). A helical membrane pass occupies residues 6–26 (LLFFATALCEIIGCFLPWLWL). Topologically, residues 27–30 (KRNA) are cytoplasmic. Residues 31–51 (SIWLLLPAGISLALFVWLLTL) form a helical membrane-spanning segment. The Periplasmic portion of the chain corresponds to 52–60 (HPAASGRVY). The helical transmembrane segment at 61–81 (AAYGGVYVCTALMWLRVVDGV) threads the bilayer. Residues 82–84 (KLT) are Cytoplasmic-facing. The chain crosses the membrane as a helical span at residues 85–105 (LYDWTGPLIALCGMLIIVVGW). Over 106–108 (GRT) the chain is Periplasmic.

The protein belongs to the UPF0060 family.

It localises to the cell inner membrane. The polypeptide is UPF0060 membrane protein YnfA (Escherichia coli O157:H7).